Here is a 2958-residue protein sequence, read N- to C-terminus: MEAISQLRGVPLTHQKDFSWVFLVDWILTVVVCLTMIFYMGRIYAYLVSFILEWLLWKRAKIKINVETLRVSLLGGRIHFKNLSVIHKDYTISVLEGSLTWKYWLLNCRKAELIENNKSSSGKKAKLPCKISVECEGLEIFIYNRTVAYDNVINLLSKDERDKFEKYLNEHSFPEPFSDGSSADKLDEDLSESAYTTNSDASIVNDRDYQETDIGKHPKLLMFLPIELKFSRGSLLLGNKFTPSVMILSYESGKGIIDVLPPKERLDLYRNKTQMEFKNFEISIKQNIGYDDAIGLKFKIDRGKVSKLWKTFVRVFQIVTKPVVPKKTKKSAGTSDDNFYHKWKGLSLYKASAGDAKASDLDDVEFDLTNHEYAKFTSILKCPKVTIAYDVDVPGVVPHGAHPTIPDIDGPDVGNNGAPPDFALDVQIHGGSICYGPWAQRQVSHLQRVLSPVVSRTAKPIKKLPPGSRRIYTLFRMNISIMEDTTWRIPTRESSKDPEFLKHYKETNEEYRPFGWMDLRFCKDTYANFNISVCPTVQGFQNNFHVHFLETEIRSSVNHDILLKSKVFDIDGDIGYPLGWNSKAIWIINMKSEQLEAFLLREHITLVADTLSDFSAGDPTPYELFRPFVYKVNWEMEGYSIYLNVNDHNIVNNPLDFNENCYLSLHGDKLSIDVTVPRESILGTYTDMSYEISTPMFRMMLNTPPWNTLNEFMKHKEVGRAYDFTIKGSYLLYSELDIDNVDTLVIECNSKSTVLHCYGFVMRYLTNVKMNYFGEFFNFVTSEEYTGVLGAREVGDVTTKSSVADLASTVDSGYQNSSLKNESEDKGPMKRSDLKRTTNETDIWFTFSVWDGALILPETIYSFDPCIALHFAELVVDFRSCNYYMDIMAVLNGTSIKRHVSKQINEVFDFIRRNNGADEQEHGLLSDLTIHGHRMYGLPPTEPTYFCQWDINLGDLCIDSDIEFIKGFFNSFYKIGFGYNDLENILLYDTETINDMTSLTVHVEKIRIGLKDPVMKSQSVISAESILFTLIDFENEKYSQRIDVKIPKLTISLNCVMGDGVDTSFLKFETKLRFTNFEQYKDIDKKRSEQRRYITIHDSPYHRCPFLLPLFYQDSDTYQNLYGAIAPSSSIPTLPLPTLPDTIDYIIEDIVGEYATLLETTNPFKNIFAETPSTMEPSRASFSEDDNDEEADPSSFKPVAFTEDRNHERDNYVVDVSYILLDVDPLLFIFAKSLLEQLYSENMVQVLDDIEIGIVKRLSNLQEGITSISNIDIHIAYLNLIWQETGEEGFELYLDRIDYQMSEKSLEKNRTNKLLEVAALAKVKTVRVTVNQKKNPDLSEDRPPALSLGIEGFEVWSSTEDRQVNSLNLTSSDITIDESQMEWLFEYCSDQGNLIQEVCTSFNSIQNTRSNSKTELISKLTAASEYYQISHDPYVITKPAFIMRLSKGHVRENRSWKIITRLRHILTYLPDDWQSNIDEVLKEKKYTSAKDAKNIFMSVFSTWRNWEFSDVARSYIYGKLFTAENEKHKQNLIKKLLKCTMGSFYLTVYGEGYEVEHNFVVADANLVVDLTPPVTSLPSNREETIEITGRVGSVKGKFSDRLLKLQDLIPLIAAVGEDDKSDPKKELSKQFKMNTVLLVDKSELQLVMDQTKLMSRTVGGRVSLLWENLKDSTSQAGSLVIFSQKSEVWLKHTSVILGEAQLRDFSVLATTEAWSHKPTILINNQCADLHFRAMSSTEQLVTAITEIRESLMMIKERIKFKPKSKKKSQFVDQKINTVLSCYFSNVSSEVMPLSPFYIRHEAKQLDIYFNKFGSNEILLSIWDTDFFMTSHQTKEQYLRFSFGDIEIKGGISREGYSLINVDISISMIKLTFSEPRRIVNSFLQDEKLASQGINLLYSLKPLFFSSNLPKKEKQAPSIMINWTLDTSITYFGVLVPVASTYFVFELHMLLLSLTNTNNGMLPEETKVTGQFSIENILFLIKERSLPIGLSKLLDFSIKVSTLQRTVDTEQSFQVESSHFRVCLSPDSLLRLMWGAHKLLDLSHYYSRRHAPNIWNTKMFTGKSDKSKEMPINFRSIHILSYKFCIGWIFQYGAGSNPGLMLGYNRLFSAYEKDFGKFTVVDAFFSVANGNTSSTFFSEGNEKDKYNRSFLPNMQISYWFKRCGELKDWFFRFHGEALDVNFVPSFMDVIESTLQSMRAFQELKKNILDVSESLRAENDNSYASTSVESASSSLAPFLDNIRSVNSNFKYDGGVFRVYTYEDIETKSEPSFEIKSPVVTINCTYKHDEDKVKPHKFRTLITVDPTHNTLYAGCAPLLMEFSESLQKMIKKHSTDEKPNFTKPSSQNVDYKRLLDQFDVAVKLTSAKQQLSLSCEPKAKVQADVGFESFLFSMATNEFDSEQPLEFSLTLEHTKASIKHIFSREVSTSFEVGFMDLTLLFTHPDVISMYGTGLVSDLSVFFNVKQLQNLYLFLDIWRFSSILHTRPVQRTVNKEIEMSSLTSTNYADAGTEIPWCFTLIFTNVSGDVDLGPSLGMISLRTQRTWLATDHYNEKRQLLHAFTDGISLTSEGRLSGLFEVANASWLSEVKWPPEKSKNTHPLVSTSLNIDDIAVKAAFDYHMFLIGTISNIHFHLHNEKDAKGVLPDLLQVSFSSDEIILSSTALVVANILDIYNTIVRMRQDNKISYMETLRDSNPGESRQPILYKDILRSLKLLRTDLSVNISSSKVQISPISLFDVEVLVIRIDKVSIRSETHSGKKLKTDLQLQVLDVSAALSTSKEELDEEVGASIAIDDYMHYASKIVGGTIIDIPKLAVHMTTLQEEKTNNLEYLFACSFSDKISVRWNLGPVDFIKEMWTTHVKALAVRRSQVANISFGQTEEELEESIKKEEAASKFNYIALEEPQIEVPQIRDLGDATPPMEWFGVNRKKFPKFTHQTAVIPVQKLVYLAEKQYVKILDDTH.

Residues 1–17 (MEAISQLRGVPLTHQKD) are Cytoplasmic-facing. The chain crosses the membrane as a helical; Signal-anchor for type II membrane protein span at residues 18-38 (FSWVFLVDWILTVVVCLTMIF). The Extracellular segment spans residues 39–2958 (YMGRIYAYLV…QYVKILDDTH (2920 aa)). N-linked (GlcNAc...) asparagine glycans are attached at residues Asn-82, Asn-117, Asn-144, Asn-271, Asn-478, Asn-530, Asn-816, Asn-821, Asn-839, and Asn-892. Residues 813–834 (GYQNSSLKNESEDKGPMKRSDL) form a disordered region. Residues 821–834 (NESEDKGPMKRSDL) are compositionally biased toward basic and acidic residues. Positions 1175-1196 (MEPSRASFSEDDNDEEADPSSF) are disordered. The segment covering 1183–1192 (SEDDNDEEAD) has biased composition (acidic residues). N-linked (GlcNAc...) asparagine glycans are attached at residues Asn-1309, Asn-1368, Asn-1453, Asn-1785, Asn-1921, Asn-2130, Asn-2146, Asn-2280, Asn-2337, Asn-2520, Asn-2578, Asn-2719, and Asn-2869.

This sequence belongs to the CSF1 family. Interacts with MCD4; CSF1 channels phosphatidylethanolamine to MCD4 in the endoplasmic reticulum at contact sites to support GPI anchor biosynthesis.

The protein resides in the cell membrane. It localises to the endoplasmic reticulum membrane. Its subcellular location is the mitochondrion membrane. Its function is as follows. Tube-forming lipid transport protein which provides phosphatidylethanolamine for glycosylphosphatidylinositol (GPI) anchor synthesis in the endoplasmic reticulum. Required for the glucose and other nutrients uptake at low temperature. In Saccharomyces cerevisiae (strain ATCC 204508 / S288c) (Baker's yeast), this protein is Protein CSF1.